The chain runs to 1149 residues: Transforming acidic coiled-coil-containing protein 2 (1149 aa).

Disordered stretches follow at residues 1-73 (MGNE…GSNQ), 91-227 (SASP…ASSG), and 247-430 (PCSA…VPLT). The span at 13-35 (TSSVQSPRSLQPPGKSQSLQKQQ) shows a compositional bias: polar residues. Residues 91-106 (SASPSAARASPAPLAP) show a composition bias toward low complexity. Residue serine 100 is modified to Phosphoserine. Pro residues predominate over residues 155 to 180 (KAPPAPPPPPPEVTPEPEVIDPPAPE). Serine 265 is modified (phosphoserine). 2 stretches are compositionally biased toward polar residues: residues 267–284 (ESVP…SLQA) and 300–317 (TLTT…SSTL). Residues 318 to 334 (KRTKKTRPPSLKKKQAT) are compositionally biased toward basic residues. A Phosphoserine modification is found at serine 354. The segment covering 358-368 (SEEHLAPETKT) has biased composition (basic and acidic residues). A Phosphoserine modification is found at serine 419. Residue threonine 439 is modified to Phosphothreonine. A disordered region spans residues 463–617 (SEDKGSWESQ…PAKKKKTPLK (155 aa)). Residues 481-498 (KIGKKPVAKMPLRRPKMK) show a composition bias toward basic residues. Positions 508-596 (PASPPRSPTE…SPASFEIPAS (89 aa)) constitute an SPAZ domain. 2 positions are modified to phosphoserine: serine 510 and serine 514. The residue at position 516 (threonine 516) is a Phosphothreonine. Positions 541–561 (NPFSSTSKMQESPKLSQQSYN) are enriched in polar residues. Phosphoserine occurs at positions 552, 582, 585, 587, and 596. Low complexity predominate over residues 575-590 (KASSKTPSSPSKSPAS). Residues threonine 632, threonine 653, and threonine 657 each carry the phosphothreonine modification. 2 disordered regions span residues 636–665 (KKSP…SAIS) and 696–719 (DFPQ…SEEL). Low complexity predominate over residues 652 to 665 (PTPAATPEAPSAIS). Positions 701-716 (SDLSNFVNETKFNSPS) are enriched in polar residues. Serine 714 and serine 736 each carry phosphoserine. At threonine 755 the chain carries Phosphothreonine. The disordered stretch occupies residues 756-780 (PQESPVKSPPVRMSDSPTPCSGSSF). Phosphoserine occurs at positions 759 and 771. The span at 770–780 (DSPTPCSGSSF) shows a compositional bias: polar residues. 2 coiled-coil regions span residues 877–905 (AQKL…LASR) and 948–1148 (DLDS…KMGK).

It belongs to the TACC family. As to quaternary structure, interacts with microtubules. Interacts with YEATS4, GCN5L2 and PCAF. Interacts with CCDC100/CEP120. Post-translationally, phosphorylated; which is required for localization in centrosome. As to expression, expressed in brain, kidney, lung, thymus and ovary. Not detectable in normal tissues at protein level.

It is found in the cytoplasm. The protein resides in the nucleus. Its subcellular location is the cytoskeleton. The protein localises to the microtubule organizing center. It localises to the centrosome. Plays a role in the microtubule-dependent coupling of the nucleus and the centrosome. Involved in the processes that regulate centrosome-mediated interkinetic nuclear migration (INM) of neural progenitors. May play a role in organizing centrosomal microtubules. This is Transforming acidic coiled-coil-containing protein 2 (Tacc2) from Mus musculus (Mouse).